Here is a 378-residue protein sequence, read N- to C-terminus: SPbeta prophage-derived uncharacterized protein YorJ (378 aa).

The sequence is that of SPbeta prophage-derived uncharacterized protein YorJ (yorJ) from Bacillus subtilis (strain 168).